We begin with the raw amino-acid sequence, 87 residues long: U14-lycotoxin-Ls1a (87 aa).

The first 20 residues, 1–20, serve as a signal peptide directing secretion; sequence MNSKVFAALLLLALSTCVLS. The WAP domain occupies 21-66; the sequence is EKYCPTPRNTSCKKMNIRNNCCRDSDCTSNAFCCAEPCGNFCHKAS. Intrachain disulfides connect cysteine 24–cysteine 54, cysteine 32–cysteine 58, cysteine 41–cysteine 53, cysteine 42–cysteine 80, and cysteine 47–cysteine 62.

This sequence belongs to the venom protein 11 family. 01 (wap-1) subfamily. Post-translationally, contains 5 disulfide bonds. In terms of tissue distribution, expressed by the venom gland.

The protein resides in the secreted. In terms of biological role, has antibacterial activity. In Lycosa singoriensis (Wolf spider), this protein is U14-lycotoxin-Ls1a.